A 431-amino-acid polypeptide reads, in one-letter code: Trigger factor (431 aa).

The PPIase FKBP-type domain maps to 164-249 (GNIAVIDFKG…IKEIKVKELP (86 aa)).

Belongs to the FKBP-type PPIase family. Tig subfamily.

The protein resides in the cytoplasm. It carries out the reaction [protein]-peptidylproline (omega=180) = [protein]-peptidylproline (omega=0). Functionally, involved in protein export. Acts as a chaperone by maintaining the newly synthesized protein in an open conformation. Functions as a peptidyl-prolyl cis-trans isomerase. The polypeptide is Trigger factor (Clostridium tetani (strain Massachusetts / E88)).